The primary structure comprises 430 residues: Trigger factor (430 aa).

Positions 157–242 constitute a PPIase FKBP-type domain; it reads GDLVALETWS…AVEVSEPVLP (86 aa).

Belongs to the FKBP-type PPIase family. Tig subfamily.

It localises to the cytoplasm. The enzyme catalyses [protein]-peptidylproline (omega=180) = [protein]-peptidylproline (omega=0). Functionally, involved in protein export. Acts as a chaperone by maintaining the newly synthesized protein in an open conformation. Functions as a peptidyl-prolyl cis-trans isomerase. The chain is Trigger factor from Xanthomonas campestris pv. campestris (strain B100).